The following is a 617-amino-acid chain: Autophagy-related protein 20 (617 aa).

The disordered stretch occupies residues 1 to 83; the sequence is MWNDEDNNPY…KRKPGGYDSR (83 aa). Low complexity predominate over residues 20–31; it reads QSSSINPTSPST. The span at 48 to 58 shows a compositional bias: basic and acidic residues; sequence DNEHNHGVIHD. Residues 59–68 show a composition bias toward acidic residues; that stretch reads DSDDDDEDLT. The 121-residue stretch at 89–209 folds into the PX domain; it reads YENPKLSILI…RFFDPNASWS (121 aa). Residues arginine 126, serine 128, lysine 152, and arginine 175 each coordinate a 1,2-diacyl-sn-glycero-3-phospho-(1D-myo-inositol-3-phosphate). The stretch at 403 to 440 forms a coiled coil; it reads QQDLTTEELSKKRALLDQLEQSEAEARRIENYLSSSQQ. A disordered region spans residues 434–516; sequence YLSSSQQISP…SGNSITNKIF (83 aa). Positions 454–463 are enriched in basic and acidic residues; it reads PPSHQRRDGS. Over residues 480–500 the composition is skewed to polar residues; that stretch reads DFSSHTPSASQGLPERSTSVP.

Belongs to the sorting nexin family. As to quaternary structure, forms a complex with SNX4/ATG24 and ATG17.

The protein resides in the endosome membrane. The protein localises to the preautophagosomal structure membrane. Required for cytoplasm to vacuole transport (Cvt), pexophagy and mitophagy. Also involved in endoplasmic reticulum-specific autophagic process and is essential for the survival of cells subjected to severe ER stress. Functions in protein retrieval from the endocytic pathway. Required for proper sorting of the v-SNARE protein SNC1. Autophagy is required for proper vegetative growth, asexual/sexual reproduction, and full virulence. Autophagy is particularly involved in the biosynthesis of deoxynivalenol (DON), an important virulence determinant. The sequence is that of Autophagy-related protein 20 from Gibberella zeae (strain ATCC MYA-4620 / CBS 123657 / FGSC 9075 / NRRL 31084 / PH-1) (Wheat head blight fungus).